The chain runs to 132 residues: Interleukin-4 (132 aa).

The N-terminal stretch at 1–24 (MGLTSQLIPTLVCLLALTSTFVHG) is a signal peptide. Asn28, Asn45, Asn62, and Asn101 each carry an N-linked (GlcNAc...) asparagine glycan. Intrachain disulfides connect Cys48–Cys84 and Cys70–Cys104.

It belongs to the IL-4/IL-13 family.

The protein resides in the secreted. In terms of biological role, participates in at least several B-cell activation processes as well as of other cell types. It is a costimulator of DNA-synthesis. It induces the expression of class II MHC molecules on resting B-cells. It enhances both secretion and cell surface expression of IgE and IgG1. It also regulates the expression of the low affinity Fc receptor for IgE (CD23) on both lymphocytes and monocytes. Positively regulates IL31RA expression in macrophages. Stimulates autophagy in dendritic cells by interfering with mTORC1 signaling and through the induction of RUFY4. The sequence is that of Interleukin-4 (IL4) from Ailuropoda melanoleuca (Giant panda).